Consider the following 1142-residue polypeptide: Envelopment polyprotein (1142 aa).

The signal sequence occupies residues M1–T21. Topologically, residues R22–S489 are lumenal. Intrachain disulfides connect C31–C156, C65–C162, C114–C133, C138–C143, C180–C190, and C215–C253. N139 carries N-linked (GlcNAc...) asparagine; by host glycosylation. N353 carries an N-linked (GlcNAc...) asparagine; by host glycan. 4 disulfides stabilise this stretch: C382–C441, C386–C395, C411–C430, and C458–C481. The N-linked (GlcNAc...) asparagine; by host glycan is linked to N405. Residues T490–V510 form a helical membrane-spanning segment. Residues S511–C633 are Cytoplasmic-facing. Residues C522–K539 are binding to the ribonucleoprotein. CCHC-type zinc fingers lie at residues C551–C571 and C576–C597. Binding to the ribonucleoprotein stretches follow at residues F594–L611, K598–K609, and K617–S631. The ITAM domain maps to K617–C640. Residues Y621–L624 carry the YxxL motif. The chain crosses the membrane as a helical span at residues F634–A654. Over D655–N1110 the chain is Lumenal. 8 cysteine pairs are disulfide-bonded: C741–C776, C745–C783, C757–C890, C771–C901, C786–C909, C812–C821, C829–C838, and C869–C873. Residues Y763 to C783 are fusion loop. N-linked (GlcNAc...) asparagine; by host glycosylation is present at N933. 5 cysteine pairs are disulfide-bonded: C975–C1005, C998–C1050, C1015–C1020, C1051–C1056, and C1090–C1094. The chain crosses the membrane as a helical span at residues W1111 to C1131. The binding to the ribonucleoprotein stretch occupies residues L1127 to S1142. At C1132–S1142 the chain is on the cytoplasmic side.

This sequence belongs to the hantavirus envelope glycoprotein family. In terms of assembly, homodimer. Homotetramer; forms heterotetrameric Gn-Gc spikes in the pre-fusion conformation. Interacts (via C-terminus) with the nucleoprotein. Interacts with host TUFM; this interaction contributes to the virus-induced degradation of mitochondria by autophagy, which leads to degradation of host MAVS and inhibition of type I interferon (IFN) responses. Interacts with host MAP1LC3B; this interaction contributes to the virus-induced degradation of mitochondria by autophagy, which leads to degradation of host MAVS and inhibition of type I interferon (IFN) responses. Homodimer. Homotetramer; forms heterotetrameric Gn-Gc spikes in the pre-fusion conformation. Homotrimer; forms homotrimer in the post-fusion conformation at acidic pH. Interacts (via C-terminus) with the nucleoprotein. Post-translationally, envelope polyprotein precursor is quickly cleaved in vivo just after synthesis, presumably by host signal peptidase.

The protein localises to the virion membrane. Its subcellular location is the host cell surface. It is found in the host Golgi apparatus membrane. It localises to the host endoplasmic reticulum membrane. The protein resides in the host mitochondrion. Functionally, forms homotetramers with glycoprotein C at the surface of the virion. Attaches the virion to host cell receptors including integrin alpha5/ITGB1. This attachment induces virion internalization predominantly through clathrin-dependent endocytosis. Mediates the assembly and budding of infectious virus particles through its interaction with the nucleocapsid protein and the viral genome. May dysregulate normal immune and endothelial cell responses through an ITAM motif. Translocates to mitochondria, binds to host TUFM and recruits MAP1LC3B. These interactions induce mitochondrial autophagy and therefore destruction of host MAVS leading to inhibition of type I interferon (IFN) responses. Concomitant breakdown of glycoprotein N is apparently prevented by the nucleoprotein that may inhibit Gn-stimulated autophagosome-lysosome fusion. Interacts with the viral genomic RNA. Forms homotetramers with glycoprotein N at the surface of the virion. Attaches the virion to host cell receptors including integrin ITGAV/ITGB3. This attachment induces virion internalization predominantly through clathrin-dependent endocytosis. Class II fusion protein that promotes fusion of viral membrane with host endosomal membrane after endocytosis of the virion. The chain is Envelopment polyprotein (GP) from Microtus pennsylvanicus (Meadow vole).